The primary structure comprises 391 residues: Response regulator aspartate phosphatase I (391 aa).

TPR repeat units follow at residues 62–95, 150–183, 184–217, 224–257, 275–311, and 338–371; these read LEFR…EKQG, SYVY…AVQT, VRCQ…SKES, AMSH…FEKS, KQQN…LEGL, and ENFS…RRKI.

This sequence belongs to the Rap family.

Its subcellular location is the cytoplasm. Inhibited by PhrI. In terms of biological role, activates ICEBs1 gene expression, excision and transfer by inactivating the ICEBs1 repressor protein ImmR. RapI-mediated induction likely results from an increase in the specific activity of the protease ImmA, which mediates proteolysis of ImmR. In addition, is involved in regulation of sporulation. Acts as a phosphatase that specifically dephosphorylates the sporulation initiation phosphotransferase Spo0F and inhibits its activity. The polypeptide is Response regulator aspartate phosphatase I (rapI) (Bacillus subtilis (strain 168)).